Consider the following 130-residue polypeptide: Flagellar assembly factor FliW (130 aa).

It belongs to the FliW family. In terms of assembly, interacts with translational regulator CsrA and flagellin(s).

The protein resides in the cytoplasm. Functionally, acts as an anti-CsrA protein, binds CsrA and prevents it from repressing translation of its target genes, one of which is flagellin. Binds to flagellin and participates in the assembly of the flagellum. The sequence is that of Flagellar assembly factor FliW from Borrelia duttonii (strain Ly).